A 731-amino-acid polypeptide reads, in one-letter code: Anaphase-promoting complex subunit 2 (731 aa).

It belongs to the cullin family. In terms of assembly, the APC/C is probably composed of at least 12 subunits: apc-2, apc-10, apc-11, cdc-26, emb-1, emb-27, emb-30, mat-1, mat-2, mat-3, such-1 and gfi-3.

It functions in the pathway protein modification; protein ubiquitination. Probable component of the anaphase promoting complex/cyclosome (APC/C), a cell cycle-regulated ubiquitin ligase that controls progression through mitosis and the G1 phase of the cell cycle. The APC/C complex acts by mediating ubiquitination and subsequent degradation of target proteins. Developmental role in early embryogenesis and the metaphase to anaphase transition in meiosis and mitosis. The chain is Anaphase-promoting complex subunit 2 from Caenorhabditis elegans.